The primary structure comprises 492 residues: Probable glycine dehydrogenase (decarboxylating) subunit 2 (492 aa).

At K274 the chain carries N6-(pyridoxal phosphate)lysine.

This sequence belongs to the GcvP family. C-terminal subunit subfamily. In terms of assembly, the glycine cleavage system is composed of four proteins: P, T, L and H. In this organism, the P 'protein' is a heterodimer of two subunits. Requires pyridoxal 5'-phosphate as cofactor.

The catalysed reaction is N(6)-[(R)-lipoyl]-L-lysyl-[glycine-cleavage complex H protein] + glycine + H(+) = N(6)-[(R)-S(8)-aminomethyldihydrolipoyl]-L-lysyl-[glycine-cleavage complex H protein] + CO2. In terms of biological role, the glycine cleavage system catalyzes the degradation of glycine. The P protein binds the alpha-amino group of glycine through its pyridoxal phosphate cofactor; CO(2) is released and the remaining methylamine moiety is then transferred to the lipoamide cofactor of the H protein. The sequence is that of Probable glycine dehydrogenase (decarboxylating) subunit 2 from Staphylococcus saprophyticus subsp. saprophyticus (strain ATCC 15305 / DSM 20229 / NCIMB 8711 / NCTC 7292 / S-41).